Here is a 37-residue protein sequence, read N- to C-terminus: Large ribosomal subunit protein bL36 (37 aa).

This sequence belongs to the bacterial ribosomal protein bL36 family.

The protein is Large ribosomal subunit protein bL36 of Natranaerobius thermophilus (strain ATCC BAA-1301 / DSM 18059 / JW/NM-WN-LF).